The primary structure comprises 412 residues: MKENFNVSKLKNGLTILTYNMPYVNSVAINLIAKVGSRYENPGEEGIAHFLEHMAFKGTKTRTAKQIAEEFDSIGGHFNAYTGHEKTVYYSRVLSENCNKALAIIADIVQNSAFAEEEIAKEYQVILQEIAHAQDNPDDLVYEKFYNSVFKDQPLGKPILGTSKTIETFNRDHFLKFTGKHYNAENFYLSIAGNVDHEEIVKEAERLFSSLTQGEKSNFSPAKYIGGHSFINKDLEQTTLILGFEGTSYINLERLYQTQLLAIIFGGGMSSRLFQHIREKLGLAYAVGSYNSPYFDSGVFTIYASTAHDKLELLAAELKNEIKRMAEQVKQEEIERARTQIRSNLQMAQEKVAYKSEEIGKNYAVFGKYISPEEIMEIIMNIKAADIIQTANRIFSSSATSAVIGPNNLSGF.

Residue H49 participates in Zn(2+) binding. E52 functions as the Proton acceptor in the catalytic mechanism. Positions 53 and 129 each coordinate Zn(2+).

It belongs to the peptidase M16 family. Requires Zn(2+) as cofactor.

This is an uncharacterized protein from Rickettsia bellii (strain RML369-C).